The chain runs to 278 residues: Small ribosomal subunit protein uS2 (278 aa).

The segment at 235–278 is disordered; it reads AEAAEEAPKRERKAKAAVKKERTKKEDDDALNANVAGKFAKDEE. Residues 252–261 show a composition bias toward basic and acidic residues; the sequence is VKKERTKKED.

It belongs to the universal ribosomal protein uS2 family.

This Parabacteroides distasonis (strain ATCC 8503 / DSM 20701 / CIP 104284 / JCM 5825 / NCTC 11152) protein is Small ribosomal subunit protein uS2.